A 418-amino-acid chain; its full sequence is LL-diaminopimelate aminotransferase (418 aa).

Substrate-binding residues include tyrosine 25 and glycine 52. Residues tyrosine 78, 115-116 (SK), tyrosine 140, asparagine 190, tyrosine 221, and 248-250 (SFS) contribute to the pyridoxal 5'-phosphate site. Residues lysine 116, tyrosine 140, and asparagine 190 each contribute to the substrate site. Lysine 251 bears the N6-(pyridoxal phosphate)lysine mark. Position 259 (arginine 259) interacts with pyridoxal 5'-phosphate.

It belongs to the class-I pyridoxal-phosphate-dependent aminotransferase family. In terms of assembly, homodimer. Requires pyridoxal 5'-phosphate as cofactor.

The protein localises to the cytoplasm. It carries out the reaction (2S,6S)-2,6-diaminopimelate + 2-oxoglutarate = (S)-2,3,4,5-tetrahydrodipicolinate + L-glutamate + H2O + H(+). It functions in the pathway amino-acid biosynthesis; L-lysine biosynthesis via DAP pathway; LL-2,6-diaminopimelate from (S)-tetrahydrodipicolinate (aminotransferase route): step 1/1. Its function is as follows. Involved in the synthesis of meso-diaminopimelate (m-DAP or DL-DAP), required for both lysine and peptidoglycan biosynthesis. Catalyzes the direct conversion of tetrahydrodipicolinate to LL-diaminopimelate, a reaction that requires three enzymes in E.coli. The polypeptide is LL-diaminopimelate aminotransferase (dapL) (Methanocaldococcus jannaschii (strain ATCC 43067 / DSM 2661 / JAL-1 / JCM 10045 / NBRC 100440) (Methanococcus jannaschii)).